Reading from the N-terminus, the 473-residue chain is Hyaluronidase-2 (473 aa).

The N-terminal stretch at 1–20 (MRAGPGPTVTLALVLAVSWA) is a signal peptide. Cystine bridges form between C47-C340 and C211-C227. N-linked (GlcNAc...) asparagine glycans are attached at residues N74 and N103. The active-site Proton donor is E135. A glycan (N-linked (GlcNAc...) asparagine) is linked at N357. The EGF-like domain occupies 361–439 (ATQYCSRAQC…YLGWSGEQCQ (79 aa)). 3 disulfide bridges follow: C365–C376, C370–C427, and C429–C438. G448 carries GPI-anchor amidated glycine lipidation. Residues 449–473 (ASEAWAGSHLTSLLALAALAFTWTL) constitute a propeptide, removed in mature form.

Belongs to the glycosyl hydrolase 56 family. In terms of assembly, interacts with MST1R. Widely expressed (at protein level).

The protein resides in the cell membrane. It carries out the reaction Random hydrolysis of (1-&gt;4)-linkages between N-acetyl-beta-D-glucosamine and D-glucuronate residues in hyaluronate.. Catalyzes hyaluronan degradation into small fragments that are endocytosed and degraded in lysosomes by HYAL1 and exoglycosidases. Essential for the breakdown of extracellular matrix hyaluronan. This Homo sapiens (Human) protein is Hyaluronidase-2 (HYAL2).